A 161-amino-acid chain; its full sequence is Efficient mitochondria targeting-associated protein 19 (161 aa).

Residues 1–10 (MKLGHREQQF) are Cytoplasmic-facing. The region spanning 7–159 (EQQFYLWYFI…PTFLIPLRLC (153 aa)) is the EXPERA domain. The chain crosses the membrane as a helical span at residues 11-31 (YLWYFIVHIPITIFIDSSVVI). The Lumenal segment spans residues 32 to 61 (PAKWQLGIAQKVVSDHIAKQHDFLLSEKPE). Residues 62 to 82 (WLYWFVVLELVLQLPLFVYFV) traverse the membrane as a helical segment. Topologically, residues 83-101 (NKFWNSSELQVNTNSRLKK) are cytoplasmic. The chain crosses the membrane as a helical span at residues 102 to 122 (WLRIYGWNASLTTLICIVVIF). At 123–141 (KRGYIPYDVLKTSLSMTQK) the chain is on the lumenal side. The chain crosses the membrane as a helical span at residues 142 to 160 (CQLASVYLPTFLIPLRLCF). Position 161 (valine 161) is a topological domain, cytoplasmic.

Belongs to the TMEM97/sigma-2 receptor family.

The protein resides in the endoplasmic reticulum membrane. Functionally, part of an import route for newly synthesized mitochondrial proteins termed the ER-SURF pathway (ER surface-mediated protein targeting), which retrieves mitochondrial precursor proteins from the ER surface and reroutes them to mitochondria for efficient mitochondrial import. Acts as a quality control factor in the ER, promoting the proteolytic degradation of nonproductive and extramitochondrial precursor proteins in the ER membrane thus removing them from the ER surface. This is Efficient mitochondria targeting-associated protein 19 from Saccharomyces cerevisiae (strain ATCC 204508 / S288c) (Baker's yeast).